The sequence spans 1052 residues: Error-prone DNA polymerase (1052 aa).

It belongs to the DNA polymerase type-C family. DnaE2 subfamily.

The protein resides in the cytoplasm. It carries out the reaction DNA(n) + a 2'-deoxyribonucleoside 5'-triphosphate = DNA(n+1) + diphosphate. DNA polymerase involved in damage-induced mutagenesis and translesion synthesis (TLS). It is not the major replicative DNA polymerase. This chain is Error-prone DNA polymerase, found in Bordetella bronchiseptica (strain ATCC BAA-588 / NCTC 13252 / RB50) (Alcaligenes bronchisepticus).